Here is a 188-residue protein sequence, read N- to C-terminus: Protein K (188 aa).

The chain is Protein K (K) from Escherichia coli.